We begin with the raw amino-acid sequence, 411 residues long: MDPESFSAAFFKWDQRPPALAPPQMQRSAGLEAQRIFHDFGVPNAAAMAASNNSSSCRKELNCLEELFRNYGVRYITLTKMVDMGFTVNTLVNMTEQELDDLVRTLVEIYRVELLVGEKYGIKSAIRAEKRRLEEAERKRMEQLFVDVDGKRKIDENALDTLSQEGLSVEEPQGDNAIILSQNNTSANFPLNLNAGMDPVLILQNSGHLGTTVSGLIGMPDTNYGSEQTKACKKQKRRRSKDSGEDGEERQREHPFIVTEPGELARGKKNGLDYLFDLYEQCGKFLLDVQHIAKERGEKCPTKVTNQVFRHAKHSGAGYINKPKMRHYVHCYALHCLDIEQSNRLRRAYKERGENVGAWRQACYYPLVAMAKDNGWDIEGVFNKHEKLRIWYVPTKLRQLCHLEKSKQSHL.

The segment at 220–259 is disordered; that stretch reads PDTNYGSEQTKACKKQKRRRSKDSGEDGEERQREHPFIVT. Positions 231-240 are enriched in basic residues; that stretch reads ACKKQKRRRS. Over residues 241-255 the composition is skewed to basic and acidic residues; the sequence is KDSGEDGEERQREHP. 3 consecutive DNA-binding regions follow at residues 252 to 256, 321 to 328, and 392 to 395; these read REHPF, NKPKMRHY, and YVPT.

Belongs to the FLO/LFY family. Expressed in vegetative buds and male cones but not in female cones, vascular tissue, roots or secondary needles.

It localises to the nucleus. Probable transcription factor. The protein is Floricaula/leafy-like protein (FLL) of Pinus radiata (Monterey pine).